The chain runs to 488 residues: SAGA complex subunit HFI1 (488 aa).

Disordered stretches follow at residues 1 to 58 (MSAI…QGPN) and 352 to 383 (QLDDDKNEDECADEAKSINNGNNSSKDDIGDI). Positions 37 to 58 (AVSNHTEPNNGNNETAEPQGPN) are enriched in polar residues.

As to quaternary structure, component of the 1.8 MDa SAGA (Spt-Ada-Gcn5 acetyltransferase) complex, which is composed of 19 subunits TRA1, SPT7, TAF5, NGG1/ADA3, SGF73, SPT20/ADA5, SPT8, TAF12, TAF6, HFI1/ADA1, UBP8, GCN5, ADA2, SPT3, SGF29, TAF10, TAF9, SGF11 and SUS1. The SAGA complex is composed of 4 modules, namely the HAT (histone acetyltransferase) module (GCN5, ADA2, NGG1/ADA3 and SGF29), the DUB (deubiquitinating) module (UBP8, SGF11, SGF73 and SUS1), the core or TAF (TBP-associated factor) module (TAF5, TAF6, TAF9, TAF10 and TAF12), and the Tra1 or SPT (Suppressor of Ty) module (TRA1, HFI1/ADA1, SPT3, SPT7, SPT8 and SPT20/ADA5). The Tra1/SPT module binds activators, the core module recruits TBP (TATA-binding protein), the HAT module contains the histone H3 acetyltransferase GCN5, and the DUB module comprises the histone H2B deubiquitinase UBP8. Also identified in an altered form of SAGA, named SALSA (SAGA altered, Spt8 absent) or SLIK (SAGA-like) complex, which contains a C-terminal truncated form of SPT7 and is missing SPT8. However, it has been shown that the SAGA and SAGA-like SALSA/SLIK transcriptional coactivators are structurally and biochemically equivalent. Component of an ADA/GCN5 complex that consists of HFI1/ADA1, ADA2, NGG1/ADA3, SPT20/ADA5 and GCN5 and probably is a subcomplex of SAGA.

It is found in the nucleus. Component of the transcription coactivator SAGA complex. SAGA acts as a general cofactor required for essentially all RNA polymerase II transcription. At the promoters, SAGA is required for transcription pre-initiation complex (PIC) recruitment. It influences RNA polymerase II transcriptional activity through different activities such as TBP interaction (via core/TAF module) and promoter selectivity, interaction with transcription activators (via Tra1/SPT module), and chromatin modification through histone acetylation (via HAT module) and deubiquitination (via DUB module). SAGA preferentially acetylates histones H3 (to form H3K9ac, H3K14ac, H3K18ac and H3K23ac) and H2B and deubiquitinates histone H2B. SAGA interacts with DNA via upstream activating sequences (UASs). Also identified in a modified version of SAGA named SALSA or SLIK. The cleavage of SPT7 and the absence of the SPT8 subunit in SLIK neither drive any major conformational differences in its structure compared with SAGA, nor significantly affect HAT, DUB, or DNA-binding activities. In Saccharomyces cerevisiae (strain ATCC 204508 / S288c) (Baker's yeast), this protein is SAGA complex subunit HFI1 (HFI1).